We begin with the raw amino-acid sequence, 338 residues long: Trans-enoyl reductase fsr4 (338 aa).

NADP(+) is bound at residue Lys-65–Lys-68. Ala-147–Cys-153 contacts substrate. Residues Ser-182 to Val-185, Ala-205 to Ala-208, Tyr-227, and Ile-277 to Ile-278 contribute to the NADP(+) site.

The protein belongs to the zinc-containing alcohol dehydrogenase family.

Trans-enoyl reductase; part of the gene cluster that mediates the biosynthesis of fusarubins, highly pigmented naphthoquinones responsible for the coloration of the fruiting bodies. The non-reducing polyketide synthase FSR1 is responsible for the condensation of seven acetyl-CoA units to yield a haptaketide. After rings A and B are formed by aldol-type cyclization, the PKS-derived product is released as 6-O-demethylfusarubinaldehyde. Then, two hydroxyl groups at C-5 and C-10 are incorporated by FSR3, and simultaneously hydroxyl groups at C-6 and C-8 are methylated by FSR2. The aldehyde is, on the one hand, reduced by FSR3 to 8-O-methylfusarubin alcohol, which equilibrates mainly with 8-O-methylfusarubin and only small amounts of 8-O-methylnectriafurone. On the other hand, the aldehyde can be oxidized to form 8-O-methylfusarubinic acid, a reaction driven by FSR3 equilibrating with 8-O-methylfusarubinlactone, finally resulting in 8-O-methylanhydrofusarubinlactol after a further reduction step and loss of water. 8-O-Methylfusarubinic acid can also undergo decarboxylation, resulting in 8-O-methyl-13-hydroxynorjavanicin after another hydroxylation step at C-13. Both steps are most likely also accomplished by FSR3. No enzymatic function has been determined so far for either FSR4 and FSR5. Their deletion does not alter the product spectrum, but the possibility that they catalyze specific enzymatic steps during perithecium development cannot be ruled out. FSR4 might possess a regulatory function in the biosynthesis of fusarubins. The sequence is that of Trans-enoyl reductase fsr4 from Gibberella fujikuroi (strain CBS 195.34 / IMI 58289 / NRRL A-6831) (Bakanae and foot rot disease fungus).